The chain runs to 276 residues: MSGGAAHSALTEEDVMKLLATQAHLGSTNLNFQMQQYVYKRRFDGPNIINVKKTWEKLLLAARAIAAVENPADVVVVSARPYAQRALLKFAAHTGATAIFGRFSPGCLTNQIQKTFKEPRLLVISDPRIDHQAVTEASYVGVPVISFVNTESPLKLIDIGVPCNNKGERSIGLMWWMLAREILILRGKISRQTGFVLEGKEIMPDLYFYRDPTETEKEETGAHADVAEAQEYQQPTDIDFTTQGGKVDDWAAETATWTAETKTTEEWANAPTQSNW.

Serine 2 bears the N-acetylserine mark.

It belongs to the universal ribosomal protein uS2 family. Component of the small ribosomal subunit. Mature ribosomes consist of a small (40S) and a large (60S) subunit. The 40S subunit contains about 33 different proteins and 1 molecule of RNA (18S). The 60S subunit contains about 49 different proteins and 3 molecules of RNA (28S, 5.8S and 5S). Interacts with rps-21.

The protein resides in the cytoplasm. In terms of biological role, required for the assembly and/or stability of the 40S ribosomal subunit. Required for the processing of the 20S rRNA-precursor to mature 18S rRNA in a late step of the maturation of 40S ribosomal subunits. Involved in cold-warm shock-induced translocation of the RNA exosome components from the nucleolus to nucleoplasm. The sequence is that of Small ribosomal subunit protein uS2 from Caenorhabditis elegans.